The sequence spans 116 residues: Cocaine- and amphetamine-regulated transcript protein (116 aa).

The first 27 residues, 1-27 (MESSRVRLLPLLGAALLLMLPLLGTRA), serve as a signal peptide directing secretion. Tyrosine 41 carries the phosphotyrosine modification. At serine 48 the chain carries Phosphoserine. 3 cysteine pairs are disulfide-bonded: cysteine 82-cysteine 100, cysteine 88-cysteine 108, and cysteine 102-cysteine 115.

The protein belongs to the CART family. As to expression, hypothalamus. Found in neurons of the ventrolateral part of the arcuate nucleus, in the external zone of the median eminence, and also found in terminals in the periventricular part of the paraventricular nucleus.

It localises to the secreted. In terms of biological role, satiety factor closely associated with the actions of leptin and neuropeptide Y; this anorectic peptide inhibits both normal and starvation-induced feeding and completely blocks the feeding response induced by neuropeptide Y and regulated by leptin in the hypothalamus. It promotes neuronal development and survival in vitro. The polypeptide is Cocaine- and amphetamine-regulated transcript protein (CARTPT) (Homo sapiens (Human)).